We begin with the raw amino-acid sequence, 253 residues long: CD151 antigen (253 aa).

Residues 1–18 are Cytoplasmic-facing; sequence MGEFNEKKATCGTVCLKY. 2 S-palmitoyl cysteine lipidation sites follow: Cys-11 and Cys-15. Residues 19 to 39 form a helical membrane-spanning segment; it reads LLFTYNCCFWLAGLAVMAVGI. Residues 40 to 57 are Extracellular-facing; that stretch reads WTLALKSDYISLLASSTY. A helical transmembrane segment spans residues 58–78; the sequence is LATAYILVVAGVVVMVTGVLG. Residues 79 to 91 lie on the Cytoplasmic side of the membrane; it reads CCATFKERRNLLR. A helical membrane pass occupies residues 92–112; the sequence is LYFILLLIIFLLEIIAGILAY. The Extracellular segment spans residues 113–221; the sequence is VYYQQLNTEL…LESFIQEHLR (109 aa). An N-linked (GlcNAc...) asparagine glycan is attached at Asn-159. Residues 222–242 form a helical membrane-spanning segment; it reads VIGAVGIGIACVQVFGMIFTC. S-palmitoyl cysteine attachment occurs at residues Cys-242 and Cys-243. At 243-253 the chain is on the cytoplasmic side; sequence CLYRSLKLEHY.

It belongs to the tetraspanin (TM4SF) family. In terms of assembly, interacts with integrins ITGA3:ITGB1, ITGA5:ITGB1, ITGA3:ITGB1 and ITGA6:ITGB4 and with CD9 and CD181. Interacts (via the second extracellular domain) with integrin ITGAV:ITGB3. Interacts with ITGA3; this interaction modulates ITGA3 glycosylation pattern. Interacts with F11R. Interacts with RAC1 and CDC42; these interactions mediate physical association of RAC1 and CDC42 with integrin adhesion receptor complexes. In terms of processing, palmitoylated. Palmitoylation by ZDHHC2 regulates CD151 expression, association with other tetraspanin family proteins and function in cell adhesion. Ubiquitinated by RNF128 on lysine residues present in the tetraspanin amino terminus via 'Lys-48'-linked ubiquitin leading to proteasomal degradation.

Its subcellular location is the cell membrane. Structural component of specialized membrane microdomains known as tetraspanin-enriched microdomains (TERMs), which act as platforms for receptor clustering and signaling. Plays a role in various cellular and molecular mechanism through its association with both integrin and non-integrin proteins. These interactions facilitate critical cellular functions, including cell-to-cell communication, wound healing, platelet aggregation, trafficking, cell motility, and angiogenesis. Via interaction with JAM-A/F11R and integrin ITGA3:ITGB1, promotes the recruitment of signaling molecules such as RAC1, CDC42 and RhoGTPases to facilitate the polarization of epithelial cells and the reorganization of the actin cytoskeleton, which are critical steps in cell migration process. Regulates the glycosylation pattern of ITGA3:ITGB1 thereby modulating its activity. Plays an essential role in the maintenance of central laminin-binding integrin ITGA6:ITGB4-containing adhesion complexes. Essential for the proper assembly of the glomerular and tubular basement membranes in kidney. Contributes to T-cell activation by modulating integrin signaling leading to activation of downstream targets PTK2 and MAPK1/MAPK3. This Rattus norvegicus (Rat) protein is CD151 antigen (Cd151).